The chain runs to 291 residues: MSPTQPNPAAALSGSAEPQTKRIYISNLDFSTTEEELEQFLQEFRVVSVLIPSQTVRGFRNSTVRPLGIGYADFASAADALQAVENLNGKQLRERTLKIKMYVPYSPRARAERRKEKRKVPAPQAEENPDAAPQDAQQPQPPAPAEEPTSKDTVYCAYLPSKVTDVELREFFADYQPQDIYVYRTNGSRRKVYFHRRFTAALVTLGGEAELANAIETLGTRRLMGKKITLRPARLSKVEEVQHAAARKLELEQIQQQTRQIAEHAMAMEEHRQQEAEIPAAETPDDVAATA.

The RRM 1 domain occupies 21 to 104; it reads KRIYISNLDF…RTLKIKMYVP (84 aa). Residues 109-151 form a disordered region; that stretch reads ARAERRKEKRKVPAPQAEENPDAAPQDAQQPQPPAPAEEPTSK. One can recognise an RRM 2 domain in the interval 152–235; that stretch reads DTVYCAYLPS…KKITLRPARL (84 aa). Residues 271–291 form a disordered region; the sequence is HRQQEAEIPAAETPDDVAATA.

This sequence belongs to the RRT5 family.

Functionally, may be involved in the modulation of rDNA transcription. This Lachancea thermotolerans (strain ATCC 56472 / CBS 6340 / NRRL Y-8284) (Yeast) protein is Regulator of rDNA transcription protein 5 (RRT5).